The chain runs to 571 residues: Urease subunit alpha (571 aa).

The Urease domain maps to 133-571; that stretch reads GGIDTHIHFV…LPLAQRYFLF (439 aa). 3 residues coordinate Ni(2+): His138, His140, and Lys221. The residue at position 221 (Lys221) is an N6-carboxylysine. Residue His223 coordinates substrate. Positions 250 and 276 each coordinate Ni(2+). The active-site Proton donor is the His324. Asp364 contributes to the Ni(2+) binding site.

This sequence belongs to the metallo-dependent hydrolases superfamily. Urease alpha subunit family. Heterotrimer of UreA (gamma), UreB (beta) and UreC (alpha) subunits. Three heterotrimers associate to form the active enzyme. Ni cation serves as cofactor. In terms of processing, carboxylation allows a single lysine to coordinate two nickel ions.

It is found in the cytoplasm. The catalysed reaction is urea + 2 H2O + H(+) = hydrogencarbonate + 2 NH4(+). It functions in the pathway nitrogen metabolism; urea degradation; CO(2) and NH(3) from urea (urease route): step 1/1. The polypeptide is Urease subunit alpha (Anaeromyxobacter sp. (strain K)).